The sequence spans 27 residues: L-amino-acid oxidase (27 aa).

Homodimer; non-covalently linked. FAD is required as a cofactor. In terms of processing, contains 2 disulfide bonds. N-glycosylated. As to expression, expressed by the venom gland.

Its subcellular location is the secreted. It catalyses the reaction an L-alpha-amino acid + O2 + H2O = a 2-oxocarboxylate + H2O2 + NH4(+). It carries out the reaction L-leucine + O2 + H2O = 4-methyl-2-oxopentanoate + H2O2 + NH4(+). Functionally, catalyzes an oxidative deamination of predominantly hydrophobic and aromatic L-amino acids, thus producing hydrogen peroxide that may contribute to the diverse toxic effects of this enzyme. Shows activity on L-Leu. Exhibits diverse biological activities, such as hemolysis, edema, apoptosis, as well as induction of platelet aggregation. Effects of snake L-amino oxidases on platelets are controversial, since they either induce aggregation or inhibit agonist-induced aggregation. These different effects are probably due to different experimental conditions. Unlike other snake venom L-amino acid oxidases, does not induce hemorrhage. This protein may also have antibacterial and antiparasitic activities. This chain is L-amino-acid oxidase, found in Eristicophis macmahoni (Leaf-nosed viper).